The chain runs to 217 residues: Frataxin, mitochondrial (217 aa).

Residues 1–42 (MWTLGRRSVASFLPRSALPGFAPTRAGAPRPAKDLSLSGLPG) constitute a mitochondrion transit peptide.

This sequence belongs to the frataxin family. As to quaternary structure, component of the mitochondrial core iron-sulfur cluster (ISC) complex composed of NFS1, LYRM4, NDUFAB1, ISCU, FXN, and FDX2; this complex is a heterohexamer containing two copies of each monomer. Homodimer. Monomer (probable predominant form). Oligomer. Monomers and polymeric aggregates of &gt;1 MDa have been isolated from mitochondria. A small fraction of heterologous overexpressed recombinant frataxin forms high-molecular weight aggregates that incorporate iron. Interacts with LYRM4. Interacts (via ferrous form) with ISCU; the interaction is possible when both are bound to the dimeric form of the cysteine desulfurase complex (NFS1:LYRM4) and the interaction enhances FXN interaction to the dimeric form of the cysteine desulfurase complex (NFS1:LYRM4). Interacts with FECH; one iron-bound FXN monomer seems to interact with a FECH homodimer. Interacts with SDHA and SDHB. Interacts with ACO2; the interaction is dependent on citrate. Interacts with HSPA9. Interacts with ACO1. Interacts with ISCU (cytoplasmic form). Processed in two steps by mitochondrial processing peptidase (MPP). MPP first cleaves the precursor to intermediate form and subsequently converts the intermediate to yield frataxin mature form (frataxin(81-210)) which is the predominant form. The additional forms, frataxin(56-210) and frataxin(78-210), seem to be produced when the normal maturation process is impaired; their physiological relevance is unsure.

The protein localises to the mitochondrion. It is found in the cytoplasm. The protein resides in the cytosol. It carries out the reaction 4 Fe(2+) + O2 + 4 H(+) = 4 Fe(3+) + 2 H2O. Its function is as follows. Functions as an activator of persulfide transfer to the scaffoding protein ISCU as component of the core iron-sulfur cluster (ISC) assembly complex and participates to the [2Fe-2S] cluster assembly. Accelerates sulfur transfer from NFS1 persulfide intermediate to ISCU and to small thiols such as L-cysteine and glutathione leading to persulfuration of these thiols and ultimately sulfide release. Binds ferrous ion and is released from FXN upon the addition of both L-cysteine and reduced FDX2 during [2Fe-2S] cluster assembly. The core iron-sulfur cluster (ISC) assembly complex is involved in the de novo synthesis of a [2Fe-2S] cluster, the first step of the mitochondrial iron-sulfur protein biogenesis. This process is initiated by the cysteine desulfurase complex (NFS1:LYRM4:NDUFAB1) that produces persulfide which is delivered on the scaffold protein ISCU in a FXN-dependent manner. Then this complex is stabilized by FDX2 which provides reducing equivalents to accomplish the [2Fe-2S] cluster assembly. Finally, the [2Fe-2S] cluster is transferred from ISCU to chaperone proteins, including HSCB, HSPA9 and GLRX5. May play a role in the protection against iron-catalyzed oxidative stress through its ability to catalyze the oxidation of Fe(2+) to Fe(3+); the oligomeric form but not the monomeric form has in vitro ferroxidase activity. May be able to store large amounts of iron in the form of a ferrihydrite mineral by oligomerization; however, the physiological relevance is unsure as reports are conflicting and the function has only been shown using heterologous overexpression systems. May function as an iron chaperone protein that protects the aconitase [4Fe-4S]2+ cluster from disassembly and promotes enzyme reactivation. May play a role as a high affinity iron binding partner for FECH that is capable of both delivering iron to ferrochelatase and mediating the terminal step in mitochondrial heme biosynthesis. Modulates the RNA-binding activity of ACO1. May be involved in the cytoplasmic iron-sulfur protein biogenesis. May contribute to oxidative stress resistance and overall cell survival. The polypeptide is Frataxin, mitochondrial (Bos taurus (Bovine)).